Consider the following 142-residue polypeptide: ATP synthase epsilon chain (142 aa).

This sequence belongs to the ATPase epsilon chain family. As to quaternary structure, F-type ATPases have 2 components, CF(1) - the catalytic core - and CF(0) - the membrane proton channel. CF(1) has five subunits: alpha(3), beta(3), gamma(1), delta(1), epsilon(1). CF(0) has three main subunits: a, b and c.

The protein localises to the cell inner membrane. Its function is as follows. Produces ATP from ADP in the presence of a proton gradient across the membrane. This Actinobacillus succinogenes (strain ATCC 55618 / DSM 22257 / CCUG 43843 / 130Z) protein is ATP synthase epsilon chain.